A 282-amino-acid polypeptide reads, in one-letter code: 2-dehydro-3-deoxyphosphooctonate aldolase (282 aa).

The protein belongs to the KdsA family.

The protein localises to the cytoplasm. The catalysed reaction is D-arabinose 5-phosphate + phosphoenolpyruvate + H2O = 3-deoxy-alpha-D-manno-2-octulosonate-8-phosphate + phosphate. Its pathway is carbohydrate biosynthesis; 3-deoxy-D-manno-octulosonate biosynthesis; 3-deoxy-D-manno-octulosonate from D-ribulose 5-phosphate: step 2/3. The protein operates within bacterial outer membrane biogenesis; lipopolysaccharide biosynthesis. This Shewanella baltica (strain OS185) protein is 2-dehydro-3-deoxyphosphooctonate aldolase.